The sequence spans 159 residues: Phosphopantetheine adenylyltransferase (159 aa).

T10 is a binding site for substrate. Residues 10 to 11 (TF) and H18 each bind ATP. K42, M74, and R88 together coordinate substrate. ATP is bound by residues 89–91 (GLR), E99, and 124–130 (WSFISSS).

Belongs to the bacterial CoaD family. Homohexamer. Mg(2+) is required as a cofactor.

It is found in the cytoplasm. It catalyses the reaction (R)-4'-phosphopantetheine + ATP + H(+) = 3'-dephospho-CoA + diphosphate. It functions in the pathway cofactor biosynthesis; coenzyme A biosynthesis; CoA from (R)-pantothenate: step 4/5. Its function is as follows. Reversibly transfers an adenylyl group from ATP to 4'-phosphopantetheine, yielding dephospho-CoA (dPCoA) and pyrophosphate. The chain is Phosphopantetheine adenylyltransferase from Salmonella agona (strain SL483).